The following is a 408-amino-acid chain: Protein EcsB (408 aa).

Transmembrane regions (helical) follow at residues 30–50 (HLVIVLIFFLAGAASWYSKWI), 53–73 (IPAHFPSFWVMAVLFSLVLTS), 111–131 (LFPLIALSIVAMPLYFAVTPG), 134–154 (LVSYAAVFVQLLLLKAWNQVM), 180–200 (LVLYFVFQSVYMYALLVYVIM), 284–304 (YLGILVRLTIVFALIIMYVSA), 308–328 (IAAVLTVFAIFITGIQLLPLF), 351–371 (YFSLLKTALSIQALLMSVASA), and 374–394 (AGLTGFLYALIGSAVLIFVVL).

The protein resides in the cell membrane. In terms of biological role, presumed to form part of an ABC-transporter, it may form a transport channel. In Bacillus subtilis (strain 168), this protein is Protein EcsB (ecsB).